Consider the following 176-residue polypeptide: Ribosome maturation factor RimM (176 aa).

Positions 97–176 (EDEFYWRDLI…QILVDWDPDF (80 aa)) constitute a PRC barrel domain.

It belongs to the RimM family. As to quaternary structure, binds ribosomal protein uS19.

The protein localises to the cytoplasm. Functionally, an accessory protein needed during the final step in the assembly of 30S ribosomal subunit, possibly for assembly of the head region. Essential for efficient processing of 16S rRNA. May be needed both before and after RbfA during the maturation of 16S rRNA. It has affinity for free ribosomal 30S subunits but not for 70S ribosomes. The chain is Ribosome maturation factor RimM from Shewanella halifaxensis (strain HAW-EB4).